The primary structure comprises 530 residues: Chaperonin GroEL, chloroplastic (530 aa).

ATP contacts are provided by residues 29–32 (TLGP), 86–90 (DGTTT), Gly-414, 480–482 (DAL), and Asp-496.

The protein belongs to the chaperonin (HSP60) family. In terms of assembly, forms a cylinder of 14 subunits composed of two heptameric rings stacked back-to-back. Interacts with the co-chaperonin GroES.

The protein resides in the plastid. The protein localises to the chloroplast. The enzyme catalyses ATP + H2O + a folded polypeptide = ADP + phosphate + an unfolded polypeptide.. Functionally, together with its co-chaperonin GroES, plays an essential role in assisting protein folding. The GroEL-GroES system forms a nano-cage that allows encapsulation of the non-native substrate proteins and provides a physical environment optimized to promote and accelerate protein folding. The chain is Chaperonin GroEL, chloroplastic from Cyanidium caldarium (Red alga).